The primary structure comprises 68 residues: Large ribosomal subunit protein bL32 (68 aa).

This sequence belongs to the bacterial ribosomal protein bL32 family.

This chain is Large ribosomal subunit protein bL32, found in Cereibacter sphaeroides (strain ATCC 17025 / ATH 2.4.3) (Rhodobacter sphaeroides).